The primary structure comprises 324 residues: Pseudouridine-5'-phosphate glycosidase (324 aa).

The active-site Proton donor is the Glu-43. Positions 104 and 124 each coordinate substrate. Residue Asp-156 coordinates Mn(2+). Position 158–160 (158–160 (SAD)) interacts with substrate. Residue Lys-177 is the Nucleophile of the active site.

This sequence belongs to the pseudouridine-5'-phosphate glycosidase family. As to quaternary structure, homotrimer. Mn(2+) serves as cofactor.

The enzyme catalyses D-ribose 5-phosphate + uracil = psi-UMP + H2O. In terms of biological role, catalyzes the reversible cleavage of pseudouridine 5'-phosphate (PsiMP) to ribose 5-phosphate and uracil. Functions biologically in the cleavage direction, as part of a pseudouridine degradation pathway. The protein is Pseudouridine-5'-phosphate glycosidase of Salinispora tropica (strain ATCC BAA-916 / DSM 44818 / JCM 13857 / NBRC 105044 / CNB-440).